Reading from the N-terminus, the 222-residue chain is Superoxide dismutase [Cu-Zn], chloroplastic (222 aa).

The transit peptide at 1 to 68 directs the protein to the chloroplast; that stretch reads MAAHTILASA…AASKPLTIVA (68 aa). Residues His114, His116, and His131 each contribute to the Cu cation site. Cysteines 125 and 214 form a disulfide. Zn(2+) is bound by residues His131, His139, His148, and Asp151. His188 contributes to the Cu cation binding site.

Belongs to the Cu-Zn superoxide dismutase family. As to quaternary structure, homotetramer. Requires Cu cation as cofactor. Zn(2+) serves as cofactor.

It is found in the plastid. The protein resides in the chloroplast. The enzyme catalyses 2 superoxide + 2 H(+) = H2O2 + O2. Its function is as follows. Destroys radicals which are normally produced within the cells and which are toxic to biological systems. The protein is Superoxide dismutase [Cu-Zn], chloroplastic (SODCP) of Spinacia oleracea (Spinach).